A 736-amino-acid chain; its full sequence is Na(+)/H(+) antiporter NhaA (736 aa).

The segment at 1 to 387 (MNHSPQSARP…ICGYLLLRAA (387 aa)) is na(+)/H(+) antiporter NhaA. Transmembrane regions (helical) follow at residues 23 to 43 (AGGI…NSPF), 58 to 78 (LSLA…LVGL), 96 to 116 (MLPG…FAVL), 126 to 146 (GWAV…SLLG), 155 to 175 (VFLA…IAIF), 178 to 198 (AEIS…LFVM), 201 to 221 (MGVV…FFVF), 224 to 244 (GVHA…KPAP), 265 to 285 (VAFI…FKGL), 298 to 318 (ILLG…WLAI), 334 to 354 (LYGV…IGLL), and 367 to 387 (IGVL…LRAA). A peptidase S49 region spans residues 388-736 (RPDQSAANPL…EKAIWARYGL (349 aa)).

The protein in the N-terminal section; belongs to the NhaA Na(+)/H(+) (TC 2.A.33) antiporter family. This sequence in the C-terminal section; belongs to the peptidase S49 family.

It is found in the cell inner membrane. The catalysed reaction is Na(+)(in) + 2 H(+)(out) = Na(+)(out) + 2 H(+)(in). Na(+)/H(+) antiporter that extrudes sodium in exchange for external protons. The sequence is that of Na(+)/H(+) antiporter NhaA from Brucella abortus (strain 2308).